A 276-amino-acid chain; its full sequence is Homeobox-leucine zipper protein HOX22 (276 aa).

A DNA-binding region (homeobox) is located at residues 70–130; it reads AGERKRRFTE…NKRARWRSKQ (61 aa). Positions 129–173 are leucine-zipper; the sequence is KQLEHDYAALRSKYDALHSRVESLKQEKLALTVQLHELRERLRER. A disordered region spans residues 170–212; that stretch reads LREREERSGNGGAATTAASSSSCNGSGSEEVDDDDDKRNAAAG. A compositionally biased stretch (low complexity) spans 182 to 197; sequence AATTAASSSSCNGSGS.

This sequence belongs to the HD-ZIP homeobox family. Class I subfamily. Expressed in seedlings, roots, stems, leaf sheaths and blades and panicles.

Its subcellular location is the nucleus. Its function is as follows. Probable transcription factor. This is Homeobox-leucine zipper protein HOX22 (HOX22) from Oryza sativa subsp. japonica (Rice).